A 249-amino-acid polypeptide reads, in one-letter code: MKPLHRWLPVVIGAALLIIFESRAAYAMHIMEGFLPPVWAGFWFIVVLPFWVLGLRRINRLIAGKPETRLLLGFAAAFAFVLSALKIPSVTGSSSHPTGTGLGTILFGPLVMSVLGSIVLLFQALLIAHGGLTTLGANAFSMAVVGPFVAWLIWKGLKDRAPIWLTVFLAAALADLFTYVVTSAQLALAYPDAVGGFAASFARFGAIFAVTQIPLAISEGILTVLIFNALQANAQTELQSLGVLKGAQA.

The first 27 residues, 1-27 (MKPLHRWLPVVIGAALLIIFESRAAYA), serve as a signal peptide directing secretion. A run of 6 helical transmembrane segments spans residues 33-53 (GFLPPVWAGFWFIVVLPFWVL), 70-90 (LLLGFAAAFAFVLSALKIPSV), 102-122 (LGTILFGPLVMSVLGSIVLLF), 134-154 (TLGANAFSMAVVGPFVAWLIW), 161-181 (APIWLTVFLAAALADLFTYVV), and 207-227 (IFAVTQIPLAISEGILTVLIF).

This sequence belongs to the CbiM family. In terms of assembly, forms an energy-coupling factor (ECF) transporter complex composed of an ATP-binding protein (A component, CbiO), a transmembrane protein (T component, CbiQ) and 2 possible substrate-capture proteins (S components, CbiM and CbiN) of unknown stoichimetry.

The protein resides in the cell membrane. It functions in the pathway cofactor biosynthesis; adenosylcobalamin biosynthesis. Its function is as follows. Part of the energy-coupling factor (ECF) transporter complex CbiMNOQ involved in cobalt import. The sequence is that of Cobalt transport protein CbiM from Roseiflexus sp. (strain RS-1).